We begin with the raw amino-acid sequence, 106 residues long: Small ribosomal subunit protein uS10 (106 aa).

This sequence belongs to the universal ribosomal protein uS10 family. In terms of assembly, part of the 30S ribosomal subunit.

Functionally, involved in the binding of tRNA to the ribosomes. This Pyrobaculum neutrophilum (strain DSM 2338 / JCM 9278 / NBRC 100436 / V24Sta) (Thermoproteus neutrophilus) protein is Small ribosomal subunit protein uS10.